Reading from the N-terminus, the 637-residue chain is 1-deoxy-D-xylulose-5-phosphate synthase (637 aa).

Thiamine diphosphate contacts are provided by residues H88 and G129–S131. D160 contacts Mg(2+). Residues G161–A162, N189, F293, and E370 contribute to the thiamine diphosphate site. N189 lines the Mg(2+) pocket.

Belongs to the transketolase family. DXPS subfamily. As to quaternary structure, homodimer. It depends on Mg(2+) as a cofactor. The cofactor is thiamine diphosphate.

It catalyses the reaction D-glyceraldehyde 3-phosphate + pyruvate + H(+) = 1-deoxy-D-xylulose 5-phosphate + CO2. It participates in metabolic intermediate biosynthesis; 1-deoxy-D-xylulose 5-phosphate biosynthesis; 1-deoxy-D-xylulose 5-phosphate from D-glyceraldehyde 3-phosphate and pyruvate: step 1/1. In terms of biological role, catalyzes the acyloin condensation reaction between C atoms 2 and 3 of pyruvate and glyceraldehyde 3-phosphate to yield 1-deoxy-D-xylulose-5-phosphate (DXP). In Acinetobacter baumannii (strain AYE), this protein is 1-deoxy-D-xylulose-5-phosphate synthase.